The chain runs to 92 residues: Phospholemman (92 aa).

Residues 1–20 form the signal peptide; the sequence is MASLSHILVLCVGLLAMVNA. Residues 21–35 lie on the Extracellular side of the membrane; sequence EAPQEHDPFTYDYQS. Residues 36–56 traverse the membrane as a helical segment; the sequence is LRIGGLIIAGILFILGILIVL. Residues 57-92 are Cytoplasmic-facing; it reads SRRCRCKFNQQQRTGEPDEEEGTFRSSIRRLSTRRR. The S-palmitoyl cysteine moiety is linked to residue C60. C62 carries the post-translational modification S-glutathionyl cysteine; alternate. A lipid anchor (S-palmitoyl cysteine; alternate) is attached at C62. The segment at 65–92 is disordered; that stretch reads NQQQRTGEPDEEEGTFRSSIRRLSTRRR. At T79 the chain carries Phosphothreonine. At S82 the chain carries Phosphoserine. At S83 the chain carries Phosphoserine; by PKA and PKC. Residues 83–92 are compositionally biased toward basic residues; that stretch reads SIRRLSTRRR. Position 88 is a phosphoserine; by PKA (S88). T89 carries the phosphothreonine; by PKC modification.

Belongs to the FXYD family. Homotetramer. Monomer. Regulatory subunit of the sodium/potassium-transporting ATPase (NKA) which is composed of a catalytic alpha subunit, an auxiliary non-catalytic beta subunit and an additional regulatory subunit. The monomeric form associates with NKA while the oligomeric form does not. Interacts with the catalytic alpha-1 subunit ATP1A1. Also interacts with the catalytic alpha-2 and alpha-3 subunits ATP1A2 and ATP1A3. Very little interaction with ATP1A1, ATP1A2 or ATP1A3 when phosphorylated at Ser-83. Interacts with the non-catalytic beta-1 subunit ATP1B1. Oxidative stress decreases interaction with ATP1A1 but increases interaction with ATP1B1. In terms of processing, major plasma membrane substrate for cAMP-dependent protein kinase (PKA) and protein kinase C (PKC) in several different tissues. Phosphorylated in response to insulin and adrenergic stimulation. Phosphorylation at Ser-88 stimulates sodium/potassium-transporting ATPase activity while the unphosphorylated form inhibits sodium/potassium-transporting ATPase activity. Phosphorylation increases tetramerization, decreases binding to ATP1A1 and reduces inhibition of ATP1A1 activity. Phosphorylation at Ser-83 leads to greatly reduced interaction with ATP1A1, ATP1A2 and ATP1A3. May be phosphorylated by DMPK. Post-translationally, palmitoylation increases half-life and stability and is enhanced upon phosphorylation at Ser-88 by PKA. As to expression, in the brain, detected in cerebellum and choroid plexus (at protein level).

Its subcellular location is the cell membrane. It is found in the sarcolemma. It localises to the apical cell membrane. The protein localises to the membrane. The protein resides in the caveola. Its subcellular location is the T-tubule. Associates with and regulates the activity of the sodium/potassium-transporting ATPase (NKA) which transports Na(+) out of the cell and K(+) into the cell. Inhibits NKA activity in its unphosphorylated state and stimulates activity when phosphorylated. Reduces glutathionylation of the NKA beta-1 subunit ATP1B1, thus reversing glutathionylation-mediated inhibition of ATP1B1. Contributes to female sexual development by maintaining the excitability of neurons which secrete gonadotropin-releasing hormone. This Bos taurus (Bovine) protein is Phospholemman.